The following is a 100-amino-acid chain: Apolipoprotein C-II (100 aa).

Positions 1 to 22 (MSSQFLLAFFLVLLVLGYEVQG) are cleaved as a signal peptide. Residues 66-74 (SVDEKLRDM) are lipid binding. A lipoprotein lipase cofactor region spans residues 78-100 (SSAAMSTYAGIFTDQLFTLLKGE).

It belongs to the apolipoprotein C2 family. Proapolipoprotein C-II is synthesized as a sialic acid containing glycoprotein which is subsequently desialylated prior to its proteolytic processing. Post-translationally, proapolipoprotein C-II, the major form found in plasma undergoes proteolytic cleavage of its N-terminal hexapeptide to generate the mature form apolipoprotein C-II, which occurs as the minor form in plasma.

Its subcellular location is the secreted. In terms of biological role, component of chylomicrons, very low-density lipoproteins (VLDL), low-density lipoproteins (LDL), and high-density lipoproteins (HDL) in plasma. Plays an important role in lipoprotein metabolism as an activator of lipoprotein lipase. This is Apolipoprotein C-II (APOC2) from Cricetulus griseus (Chinese hamster).